The chain runs to 446 residues: D-inositol 3-phosphate glycosyltransferase (446 aa).

Residue His19 participates in 1D-myo-inositol 3-phosphate binding. UDP-N-acetyl-alpha-D-glucosamine contacts are provided by residues 25-26 (QP) and Gly33. Residues 30-35 (DAGGMN), Lys88, Tyr121, Thr145, and Arg165 each bind 1D-myo-inositol 3-phosphate. The UDP-N-acetyl-alpha-D-glucosamine site is built by Arg239, Lys244, and Gln303. Positions 312, 313, and 315 each coordinate Mg(2+). Positions 325 and 333 each coordinate UDP-N-acetyl-alpha-D-glucosamine. Thr339 contacts Mg(2+).

It belongs to the glycosyltransferase group 1 family. MshA subfamily. In terms of assembly, homodimer.

It catalyses the reaction 1D-myo-inositol 3-phosphate + UDP-N-acetyl-alpha-D-glucosamine = 1D-myo-inositol 2-acetamido-2-deoxy-alpha-D-glucopyranoside 3-phosphate + UDP + H(+). Its function is as follows. Catalyzes the transfer of a N-acetyl-glucosamine moiety to 1D-myo-inositol 3-phosphate to produce 1D-myo-inositol 2-acetamido-2-deoxy-glucopyranoside 3-phosphate in the mycothiol biosynthesis pathway. In Rhodococcus opacus (strain B4), this protein is D-inositol 3-phosphate glycosyltransferase.